Consider the following 267-residue polypeptide: Soluble interferon gamma receptor OPG193 (267 aa).

The first 17 residues, 1 to 17, serve as a signal peptide directing secretion; the sequence is MRYIIILAVLFINSIHA. Asparagine 42 and asparagine 150 each carry an N-linked (GlcNAc...) asparagine; by host glycan.

It belongs to the type II cytokine receptor family. Homodimer. Interacts with host IFNG.

The protein localises to the secreted. Counteracts the antiviral effects of host IFN-gamma. Acts as a soluble IFN-gamma receptor and thus inhibits the interaction between host IFN-gamma and its receptor. This Cynomys gunnisoni (Gunnison's prairie dog) protein is Soluble interferon gamma receptor OPG193 (OPG193).